The following is a 68-amino-acid chain: Disintegrin EMS11A (68 aa).

In terms of domain architecture, Disintegrin spans 1 to 65 (NSAHPCCDPV…DCPRNRYKGK (65 aa)). Disulfide bonds link C6–C29, C20–C26, C25–C50, and C38–C57. A Cell attachment site; atypical (MLD) motif is present at residues 42–44 (MLD).

This sequence belongs to the disintegrin family. Dimeric disintegrin subfamily. As to quaternary structure, heterodimer; disulfide-linked. Expressed by the venom gland.

It localises to the secreted. Poor inhibitor of platelet aggregation. The disintegrin inhibits the adhesion of both the alpha-4/beta-1 (ITGA4/ITGB1) and the alpha-5/beta-1 (ITGA5/ITGB1) integrins to VCAM-1 and fibronectin respectively with almost the same degree of specificity. Inhibition on alpha-IIb/beta-3 (ITGA2B/ITGB3) is low. The polypeptide is Disintegrin EMS11A (Echis multisquamatus (Central Asian sand viper)).